Reading from the N-terminus, the 379-residue chain is Cytochrome b (379 aa).

Helical transmembrane passes span 33–53 (FGSL…FLAM), 77–98 (WTIR…FIHV), 113–133 (WNVG…GYVL), and 178–198 (FFAL…IHLL). Heme b contacts are provided by H83 and H97. Residues H182 and H196 each contribute to the heme b site. H201 is an a ubiquinone binding site. Transmembrane regions (helical) follow at residues 226–246 (TKDF…ALFY), 288–308 (LGGV…PFLQ), 320–340 (LSQF…WIGG), and 347–367 (FINI…FIMP).

This sequence belongs to the cytochrome b family. The cytochrome bc1 complex contains 11 subunits: 3 respiratory subunits (MT-CYB, CYC1 and UQCRFS1), 2 core proteins (UQCRC1 and UQCRC2) and 6 low-molecular weight proteins (UQCRH/QCR6, UQCRB/QCR7, UQCRQ/QCR8, UQCR10/QCR9, UQCR11/QCR10 and a cleavage product of UQCRFS1). This cytochrome bc1 complex then forms a dimer. It depends on heme b as a cofactor.

The protein resides in the mitochondrion inner membrane. In terms of biological role, component of the ubiquinol-cytochrome c reductase complex (complex III or cytochrome b-c1 complex) that is part of the mitochondrial respiratory chain. The b-c1 complex mediates electron transfer from ubiquinol to cytochrome c. Contributes to the generation of a proton gradient across the mitochondrial membrane that is then used for ATP synthesis. The polypeptide is Cytochrome b (MT-CYB) (Lepilemur ankaranensis (Ankarana sportive lemur)).